The chain runs to 299 residues: Very long chain fatty acid elongase 5 (299 aa).

Met1 carries the post-translational modification N-acetylmethionine. 7 helical membrane passes run 26–46 (WFLL…LLIV), 64–84 (ILVV…CELV), 112–132 (VLWW…FFIL), 150–170 (MLNI…YFGA), 172–192 (LNSF…VLSM), 205–225 (GQLL…IWPC), and 226–246 (TFPL…IALF). The disordered stretch occupies residues 262–299 (RKDHLKDHQNGSKAAVNGHTNSFSPLENNVKPRKLRKD). A compositionally biased stretch (polar residues) spans 279–288 (GHTNSFSPLE). Position 285 is a phosphoserine (Ser285).

It belongs to the ELO family. ELOVL5 subfamily. In terms of assembly, interacts with TECR.

Its subcellular location is the endoplasmic reticulum membrane. The protein localises to the cell projection. It localises to the dendrite. It catalyses the reaction a very-long-chain acyl-CoA + malonyl-CoA + H(+) = a very-long-chain 3-oxoacyl-CoA + CO2 + CoA. The catalysed reaction is (6Z,9Z,12Z)-octadecatrienoyl-CoA + malonyl-CoA + H(+) = (8Z,11Z,14Z)-3-oxoeicosatrienoyl-CoA + CO2 + CoA. It carries out the reaction (9Z,12Z,15Z)-octadecatrienoyl-CoA + malonyl-CoA + H(+) = (11Z,14Z,17Z)-3-oxoeicosatrienoyl-CoA + CO2 + CoA. The enzyme catalyses (9Z)-hexadecenoyl-CoA + malonyl-CoA + H(+) = 3-oxo-(11Z)-octadecenoyl-CoA + CO2 + CoA. It catalyses the reaction (9Z)-octadecenoyl-CoA + malonyl-CoA + H(+) = 3-oxo-(11Z)-eicosenoyl-CoA + CO2 + CoA. The catalysed reaction is (11Z)-octadecenoyl-CoA + malonyl-CoA + H(+) = 3-oxo-(13Z)-eicosenoyl-CoA + CO2 + CoA. It carries out the reaction (9Z,12Z)-octadecadienoyl-CoA + malonyl-CoA + H(+) = (11Z,14Z)-3-oxoicosa-11,14-dienoyl-CoA + CO2 + CoA. The enzyme catalyses (6Z,9Z,12Z,15Z)-octadecatetraenoyl-CoA + malonyl-CoA + H(+) = (8Z,11Z,14Z,17Z)-3-oxoicosatetraenoyl-CoA + CO2 + CoA. It catalyses the reaction (5Z,8Z,11Z,14Z)-eicosatetraenoyl-CoA + malonyl-CoA + H(+) = (7Z,10Z,13Z,16Z)-3-oxodocosatetraenoyl-CoA + CO2 + CoA. The catalysed reaction is (5Z,8Z,11Z,14Z,17Z)-eicosapentaenoyl-CoA + malonyl-CoA + H(+) = 3-oxo-(7Z,10Z,13Z,16Z,19Z)-docosapentaenoyl-CoA + CO2 + CoA. It participates in lipid metabolism; polyunsaturated fatty acid biosynthesis. Its function is as follows. Catalyzes the first and rate-limiting reaction of the four reactions that constitute the long-chain fatty acids elongation cycle. This endoplasmic reticulum-bound enzymatic process allows the addition of 2 carbons to the chain of long- and very long-chain fatty acids (VLCFAs) per cycle. Condensing enzyme that acts specifically toward polyunsaturated acyl-CoA with the higher activity toward C18:3(n-6) acyl-CoA. May participate in the production of monounsaturated and of polyunsaturated VLCFAs of different chain lengths that are involved in multiple biological processes as precursors of membrane lipids and lipid mediators. In conditions where the essential linoleic and alpha linoleic fatty acids are lacking it is also involved in the synthesis of Mead acid from oleic acid. This is Very long chain fatty acid elongase 5 from Pongo abelii (Sumatran orangutan).